The following is a 187-amino-acid chain: 5-hmdU DNA kinase (187 aa).

The protein belongs to the thymidylate kinase family. 5-hmdU DNA kinase subfamily.

The enzyme catalyses 5-hydroxymethyl-dUMP in DNA + ATP = 5-phosphomethyl-dUMP in DNA + ADP + H(+). Functionally, phosphorylates 5-hydroxymethyluracil (5hmdU) into 5-phosphomethyl-2'-deoxyuridine (5-PmdU) on DNA as a step in the pathway leading to thymidine hypermodifications in the viral genome. The phosphate is added internally to the DNA polymer. Also transfers glutamate to 5-pyrophosphoryloxymethyldeoxyuridine (5-PPmdU) to produce 5-Nalpha-glyutamylthymidine (Nalpha-GluT). As a final result of the pathway of hypermodification, 5-aminoethyl-2'-deoxyuridine (5-NedU) substitutes for about 30% of thymidines in the viral DNA. These modifications probably prevent degradation of viral genome by the host restriction-modification antiviral defense system. The sequence is that of 5-hmdU DNA kinase from Pseudomonas phage M6.